Reading from the N-terminus, the 513-residue chain is Serine/threonine-protein kinase ppk8 (513 aa).

Residues 98-114 (LSSTLTSMSEESSSTES) show a composition bias toward low complexity. Residues 98-120 (LSSTLTSMSEESSSTESKFATLN) are disordered. The Protein kinase domain occupies 241-505 (GKLNNVIGEG…ISGARSTTWM (265 aa)). ATP is bound by residues 247-255 (IGEGASSFI) and Lys270. Asp364 serves as the catalytic Proton acceptor.

Belongs to the protein kinase superfamily. Ser/Thr protein kinase family.

Its subcellular location is the cytoplasm. It localises to the nucleus. It catalyses the reaction L-seryl-[protein] + ATP = O-phospho-L-seryl-[protein] + ADP + H(+). The catalysed reaction is L-threonyl-[protein] + ATP = O-phospho-L-threonyl-[protein] + ADP + H(+). The polypeptide is Serine/threonine-protein kinase ppk8 (ppk8) (Schizosaccharomyces pombe (strain 972 / ATCC 24843) (Fission yeast)).